Consider the following 249-residue polypeptide: uncharacterized protein (249 aa).

An N-terminal signal peptide occupies residues 1 to 43 (MRRGRSRPAGAAPAALLLPLLLLLPLTGCDRLAAAPAEHAAAA). The disordered stretch occupies residues 40 to 59 (AAAAGDPAQDADRGRRLPPV). In terms of domain architecture, NodB homology spans 68–243 (PVVFLTYDDG…TIEEQGLRVG (176 aa)).

This is an uncharacterized protein from Streptomyces coelicolor (strain ATCC BAA-471 / A3(2) / M145).